A 184-amino-acid chain; its full sequence is GTP cyclohydrolase 1 (184 aa).

Residues Cys-75, His-78, and Cys-146 each coordinate Zn(2+).

It belongs to the GTP cyclohydrolase I family. In terms of assembly, homomer.

The enzyme catalyses GTP + H2O = 7,8-dihydroneopterin 3'-triphosphate + formate + H(+). It functions in the pathway cofactor biosynthesis; 7,8-dihydroneopterin triphosphate biosynthesis; 7,8-dihydroneopterin triphosphate from GTP: step 1/1. This is GTP cyclohydrolase 1 from Streptococcus pneumoniae serotype 19F (strain G54).